The chain runs to 375 residues: Growth/differentiation factor 8 (375 aa).

The N-terminal stretch at 1 to 18 is a signal peptide; that stretch reads MQKLQISVYIYLFMLIVA. Positions 19–266 are excised as a propeptide; sequence GPVDLNEKSE…VTDTPKRSRR (248 aa). N-linked (GlcNAc...) asparagine glycans are attached at residues N47 and N71. 4 disulfides stabilise this stretch: C272–C282, C281–C340, C309–C372, and C313–C374.

The protein belongs to the TGF-beta family. Homodimer; disulfide-linked. Interacts with WFIKKN2, leading to inhibit its activity. Interacts with FSTL3. Synthesized as large precursor molecule that undergoes proteolytic cleavage to generate an N-terminal propeptide and a disulfide linked C-terminal dimer, which is the biologically active molecule. The circulating form consists of a latent complex of the C-terminal dimer and other proteins, including its propeptide, which maintain the C-terminal dimer in a latent, inactive state. Ligand activation requires additional cleavage of the prodomain by a tolloid-like metalloproteinase.

Its subcellular location is the secreted. In terms of biological role, acts specifically as a negative regulator of skeletal muscle growth. The sequence is that of Growth/differentiation factor 8 (MSTN) from Taurotragus derbianus (Giant eland).